The primary structure comprises 346 residues: NADH-ubiquinone oxidoreductase chain 2 (346 aa).

11 helical membrane passes run 3-23 (PLIFTTILMTVLLGTMIVMMS), 25-45 (HWLMIWIGFEMNLLAIIPILM), 59-79 (YFLTQATASMLLMMAIIINLM), 96-116 (IIMTSALAMKLGLTPFHFWVP), 122-142 (ISLTSGLILLTWQKLAPMSIL), 149-169 (INLNILLTMAVLSILVGGWGG), 178-198 (IMAYSSIAHMGWMTAVLVYNP), 200-220 (LTMLNMLIYIMMTLTMFMLFI), 242-262 (TLILITLLSMGGLPPLSGFMP), 274-294 (SSIILPTLMAIMALLNLYFYM), and 322-342 (ITLLPPLIVMSSLLLPLTPML).

This sequence belongs to the complex I subunit 2 family. In terms of assembly, core subunit of respiratory chain NADH dehydrogenase (Complex I) which is composed of 45 different subunits. Interacts with TMEM242.

It localises to the mitochondrion inner membrane. It catalyses the reaction a ubiquinone + NADH + 5 H(+)(in) = a ubiquinol + NAD(+) + 4 H(+)(out). Functionally, core subunit of the mitochondrial membrane respiratory chain NADH dehydrogenase (Complex I) which catalyzes electron transfer from NADH through the respiratory chain, using ubiquinone as an electron acceptor. Essential for the catalytic activity and assembly of complex I. The chain is NADH-ubiquinone oxidoreductase chain 2 from Equus caballus (Horse).